Here is a 105-residue protein sequence, read N- to C-terminus: Venom metalloprotease inhibitor (105 aa).

An N-terminal signal peptide occupies residues 1-21 (MFRFVCVLFIALVVFCTTTSA). Intrachain disulfides connect C26/C61, C35/C57, C39/C50, C43/C83, and C63/C77. Residues 26-83 (CNRPNEEYRCGSACQTTCATLGQRCPIMNIRCNDACYCKEGYARYGDDTGMCVSISQC) enclose the TIL domain.

This sequence belongs to the serine protease inhibitor-like (TIL domain-containing) family. As to expression, expressed by the venom gland.

It is found in the secreted. In terms of biological role, inhibits metalloprotease (human MMP3), trypsin, chymotrypsin, plasmin and microbial serine protease (proteinase K). Exhibits antifibrinolytic activity by binding plasmin and inhibiting it. Does not inhibit elastase, thrombin or microbial serine protease (subtilisin A). The sequence is that of Venom metalloprotease inhibitor from Bombus ignitus (Bumblebee).